The following is a 69-amino-acid chain: Small cysteine-rich protein (69 aa).

Positions 1 to 19 are cleaved as a signal peptide; sequence MKLQLCLVLLLLGVLYVQS. A propeptide spanning residues 20–22 is cleaved from the precursor; that stretch reads VPE.

This sequence belongs to the Cnidaria small cysteine-rich protein (SCRiP) family. delta subfamily. In terms of processing, contains 4 disulfide bonds.

Its subcellular location is the secreted. It is found in the nematocyst. Its function is as follows. Induces neurotoxic symptoms on zebrafish. Has also been claimed to be implied in calcification, but this function seems improbable. The polypeptide is Small cysteine-rich protein (Metridium senile (Brown sea anemone)).